Here is a 242-residue protein sequence, read N- to C-terminus: Orotidine 5'-phosphate decarboxylase (242 aa).

Substrate-binding positions include Asp16, Lys37, 64–73, Thr128, Arg190, Gln199, Gly219, and Arg220; that span reads DLKFHDIPNT. Lys66 (proton donor) is an active-site residue.

Belongs to the OMP decarboxylase family. Type 1 subfamily. In terms of assembly, homodimer.

The catalysed reaction is orotidine 5'-phosphate + H(+) = UMP + CO2. It functions in the pathway pyrimidine metabolism; UMP biosynthesis via de novo pathway; UMP from orotate: step 2/2. Its function is as follows. Catalyzes the decarboxylation of orotidine 5'-monophosphate (OMP) to uridine 5'-monophosphate (UMP). The protein is Orotidine 5'-phosphate decarboxylase of Prochlorococcus marinus (strain MIT 9215).